We begin with the raw amino-acid sequence, 214 residues long: Glutathione S-transferase F12 (214 aa).

Residues valine 2–glycine 82 form the GST N-terminal domain. Residues alanine 11 to alanine 12, glutamine 40 to lysine 41, glutamine 53 to valine 54, and glutamate 66 to serine 67 contribute to the glutathione site. Residues serine 89–histidine 214 enclose the GST C-terminal domain.

The protein belongs to the GST superfamily. Phi family.

Its subcellular location is the cytoplasm. It localises to the cytosol. It catalyses the reaction RX + glutathione = an S-substituted glutathione + a halide anion + H(+). Functionally, involved in the transport and/or accumulation of both anthocyanins and proanthocyanidins (PA)s in the vacuole. Functions in the cytosol to maintain the regular accumulation in the vacuole of PA precursors, such as epicatechin and glycosylated epicatechin. The chain is Glutathione S-transferase F12 from Arabidopsis thaliana (Mouse-ear cress).